Here is a 663-residue protein sequence, read N- to C-terminus: Leishmanolysin-like peptidase (663 aa).

Position 246 (histidine 246) interacts with Zn(2+). Glutamate 247 is an active-site residue. Histidine 250 and histidine 353 together coordinate Zn(2+).

Belongs to the peptidase M8 family. Zn(2+) serves as cofactor.

It localises to the cytoplasm. Essential for the coordination of mitotic progression, and also plays a role in cell migration. The polypeptide is Leishmanolysin-like peptidase (Caenorhabditis elegans).